A 358-amino-acid polypeptide reads, in one-letter code: G-protein coupled receptor 87 (358 aa).

Residues 1 to 47 lie on the Extracellular side of the membrane; that stretch reads MGLNLTLTKLPGNELYSQASHTANSTSEGHGKNSTLHNKFDTIILPV. 3 N-linked (GlcNAc...) asparagine glycosylation sites follow: Asn-4, Asn-24, and Asn-33. Residues 48–68 form a helical membrane-spanning segment; sequence LYLVIFVASILLNGLAVWIFF. The Cytoplasmic portion of the chain corresponds to 69-75; that stretch reads HIRNKTS. The chain crosses the membrane as a helical span at residues 76-96; it reads FIFYLKNIVVADLIMTLTFPF. Over 97–116 the chain is Extracellular; that stretch reads RIVRDAGFGPWYFEFILCRY. A disulfide bridge links Cys-114 with Cys-192. A helical transmembrane segment spans residues 117-137; it reads TSVLFYANMYTSIVFLGLISV. Residues 138 to 159 are Cytoplasmic-facing; that stretch reads DRYLKVVKPFGDSRMYSITFTK. A helical transmembrane segment spans residues 160 to 180; sequence VLSVCVWVIMAILSLPNIILT. Residues 181–208 lie on the Extracellular side of the membrane; sequence NGQPTKENIHDCMKLKSPLGAKWHMAVT. Residues 209 to 229 traverse the membrane as a helical segment; that stretch reads YVDSCLFVAVLVILIGCYIAI. The Cytoplasmic segment spans residues 230–256; that stretch reads SRYIHKSSRQFISQSSRKRKHNQSIRV. A helical transmembrane segment spans residues 257–277; it reads VVAVFFTCFLPYHLCRIPFTF. The Extracellular portion of the chain corresponds to 278–297; sequence SNLDRLLDESAHKILYYCKE. The helical transmembrane segment at 298–318 threads the bilayer; sequence MTLFLSACNVCLDPIIYFFMC. Topologically, residues 319 to 358 are cytoplasmic; that stretch reads KSFSRRLFKKSNIRTRSESIRSLQSVRRSEVRIYYDYTDV.

This sequence belongs to the G-protein coupled receptor 1 family. As to expression, expressed at high levels in testis and brain and to a lesser extent placenta, ovary, prostate, and skeletal muscle but not in heart, lung, kidney, liver or intestine.

The protein localises to the cell membrane. In terms of biological role, receptor for lysophosphatidic acid (LPA). Necessary for p53/TP53-dependent survival in response to DNA damage. Promotes the Hippo-YAP signaling pathway and thereby modulates glycolysis and oxidative stress production by the regulation of hexokinase-2/HK2. The chain is G-protein coupled receptor 87 (Gpr87) from Mus musculus (Mouse).